A 220-amino-acid chain; its full sequence is Deoxyribose-phosphate aldolase (220 aa).

Catalysis depends on Asp-92, which acts as the Proton donor/acceptor. Catalysis depends on Lys-157, which acts as the Schiff-base intermediate with acetaldehyde. The active-site Proton donor/acceptor is the Lys-186.

It belongs to the DeoC/FbaB aldolase family. DeoC type 1 subfamily.

It is found in the cytoplasm. It carries out the reaction 2-deoxy-D-ribose 5-phosphate = D-glyceraldehyde 3-phosphate + acetaldehyde. Its pathway is carbohydrate degradation; 2-deoxy-D-ribose 1-phosphate degradation; D-glyceraldehyde 3-phosphate and acetaldehyde from 2-deoxy-alpha-D-ribose 1-phosphate: step 2/2. Functionally, catalyzes a reversible aldol reaction between acetaldehyde and D-glyceraldehyde 3-phosphate to generate 2-deoxy-D-ribose 5-phosphate. The chain is Deoxyribose-phosphate aldolase from Caldicellulosiruptor saccharolyticus (strain ATCC 43494 / DSM 8903 / Tp8T 6331).